The sequence spans 160 residues: SsrA-binding protein (160 aa).

The protein belongs to the SmpB family.

Its subcellular location is the cytoplasm. Its function is as follows. Required for rescue of stalled ribosomes mediated by trans-translation. Binds to transfer-messenger RNA (tmRNA), required for stable association of tmRNA with ribosomes. tmRNA and SmpB together mimic tRNA shape, replacing the anticodon stem-loop with SmpB. tmRNA is encoded by the ssrA gene; the 2 termini fold to resemble tRNA(Ala) and it encodes a 'tag peptide', a short internal open reading frame. During trans-translation Ala-aminoacylated tmRNA acts like a tRNA, entering the A-site of stalled ribosomes, displacing the stalled mRNA. The ribosome then switches to translate the ORF on the tmRNA; the nascent peptide is terminated with the 'tag peptide' encoded by the tmRNA and targeted for degradation. The ribosome is freed to recommence translation, which seems to be the essential function of trans-translation. This chain is SsrA-binding protein, found in Pectobacterium atrosepticum (strain SCRI 1043 / ATCC BAA-672) (Erwinia carotovora subsp. atroseptica).